The chain runs to 129 residues: Small ribosomal subunit protein uS11 (129 aa).

The protein belongs to the universal ribosomal protein uS11 family. As to quaternary structure, part of the 30S ribosomal subunit. Interacts with proteins S7 and S18. Binds to IF-3.

Its function is as follows. Located on the platform of the 30S subunit, it bridges several disparate RNA helices of the 16S rRNA. Forms part of the Shine-Dalgarno cleft in the 70S ribosome. The chain is Small ribosomal subunit protein uS11 from Rhizorhabdus wittichii (strain DSM 6014 / CCUG 31198 / JCM 15750 / NBRC 105917 / EY 4224 / RW1) (Sphingomonas wittichii).